Here is a 657-residue protein sequence, read N- to C-terminus: Probable intron-encoded endonuclease aI2 (657 aa).

Positions 1–245 (MKQMSYVTRW…TYEHLFWFFG (245 aa)) are COX1 exons 1 to 2 encoded. Helical transmembrane passes span 19-39 (IGMT…GMSV), 69-89 (LLMM…NFFL), 103-123 (LNNI…CSVL), 152-172 (AMFA…NFMV), 188-208 (PLFA…LPVL), and 269-289 (MYFI…ANMV). The interval 246 to 657 (QWWPTNYVNN…KFENKWNKKF (412 aa)) is COX1 intron 2 encoded.

In the C-terminal section; belongs to the LAGLIDADG endonuclease family. It in the N-terminal section; belongs to the heme-copper respiratory oxidase family. Post-translationally, the mature protein may arise from proteolytic cleavage of an in-frame translation of COX1 exons 1 and 2 plus intron 2, containing the aI2 open reading frame.

It is found in the mitochondrion. The protein localises to the membrane. In terms of biological role, mitochondrial DNA endonuclease involved in intron homing. The polypeptide is Probable intron-encoded endonuclease aI2 (aI2) (Debaryomyces hansenii (strain ATCC 36239 / CBS 767 / BCRC 21394 / JCM 1990 / NBRC 0083 / IGC 2968) (Yeast)).